A 177-amino-acid chain; its full sequence is MKIVGDSEHFKQPYDSDEEYVSKTEDKRDCEAAQKVGMELVSLSKTQLDKIELDEHLYDSIQQAHKIKPKTEAYRRHMQYIGKLMRNVDVEPIKAALAIVLNKNNNETAKLQMFEKMRERLLSQGDSEIQTLVEHYPQLDRQKLRTLVRQATKELAKGPESKSSKELFKYLRSEIQD.

The tract at residues 1 to 26 is disordered; sequence MKIVGDSEHFKQPYDSDEEYVSKTED.

It belongs to the DarP family.

It is found in the cytoplasm. Member of a network of 50S ribosomal subunit biogenesis factors which assembles along the 30S-50S interface, preventing incorrect 23S rRNA structures from forming. Promotes peptidyl transferase center (PTC) maturation. The polypeptide is Dual-action ribosomal maturation protein DarP (Shewanella sp. (strain ANA-3)).